Consider the following 392-residue polypeptide: 6-aminohexanoate-dimer hydrolase (392 aa).

A disordered region spans residues 1–27 (MNTPTTGSHPARYPSAAAGEPTLDSWQ). Ser-112 is an active-site residue.

It catalyses the reaction [N-(6-aminohexanoyl)](n) + H2O = [N-(6-aminohexanoyl)](n-1) + 6-aminohexanoate. The catalysed reaction is N-(6-aminohexanoyl)-6-aminohexanoate + H2O = 2 6-aminohexanoate. The protein operates within xenobiotic degradation; nylon-6 oligomer degradation. Involved in nylon oligomer degradation. The protein is 6-aminohexanoate-dimer hydrolase of Paenarthrobacter ureafaciens.